The following is a 625-amino-acid chain: Adenine deaminase 2 (625 aa).

It belongs to the metallo-dependent hydrolases superfamily. Adenine deaminase family. Mn(2+) serves as cofactor.

The enzyme catalyses adenine + H2O + H(+) = hypoxanthine + NH4(+). This Bradyrhizobium diazoefficiens (strain JCM 10833 / BCRC 13528 / IAM 13628 / NBRC 14792 / USDA 110) protein is Adenine deaminase 2.